Here is a 178-residue protein sequence, read N- to C-terminus: Large ribosomal subunit protein uL6 (178 aa).

It belongs to the universal ribosomal protein uL6 family. In terms of assembly, part of the 50S ribosomal subunit.

Its function is as follows. This protein binds to the 23S rRNA, and is important in its secondary structure. It is located near the subunit interface in the base of the L7/L12 stalk, and near the tRNA binding site of the peptidyltransferase center. The polypeptide is Large ribosomal subunit protein uL6 (Streptococcus suis (strain 05ZYH33)).